The following is a 242-amino-acid chain: Type III pantothenate kinase (242 aa).

7 to 14 (DLGNSRFK) serves as a coordination point for ATP. Residues Tyr-91 and 98-101 (GVDR) each bind substrate. Asp-100 serves as the catalytic Proton acceptor. ATP is bound at residue Thr-121. A substrate-binding site is contributed by Thr-171.

This sequence belongs to the type III pantothenate kinase family. In terms of assembly, homodimer. NH4(+) serves as cofactor. K(+) is required as a cofactor.

It is found in the cytoplasm. The catalysed reaction is (R)-pantothenate + ATP = (R)-4'-phosphopantothenate + ADP + H(+). The protein operates within cofactor biosynthesis; coenzyme A biosynthesis; CoA from (R)-pantothenate: step 1/5. Catalyzes the phosphorylation of pantothenate (Pan), the first step in CoA biosynthesis. The polypeptide is Type III pantothenate kinase (Xanthomonas oryzae pv. oryzae (strain MAFF 311018)).